The following is a 242-amino-acid chain: Pyridoxine 5'-phosphate synthase (242 aa).

N7 serves as a coordination point for 3-amino-2-oxopropyl phosphate. 9 to 10 serves as a coordination point for 1-deoxy-D-xylulose 5-phosphate; it reads DH. R18 contributes to the 3-amino-2-oxopropyl phosphate binding site. H43 (proton acceptor) is an active-site residue. The 1-deoxy-D-xylulose 5-phosphate site is built by R45 and H50. E70 serves as the catalytic Proton acceptor. Residue T100 participates in 1-deoxy-D-xylulose 5-phosphate binding. H190 acts as the Proton donor in catalysis. 3-amino-2-oxopropyl phosphate-binding positions include G191 and 212 to 213; that span reads GH.

The protein belongs to the PNP synthase family. In terms of assembly, homooctamer; tetramer of dimers.

It is found in the cytoplasm. It catalyses the reaction 3-amino-2-oxopropyl phosphate + 1-deoxy-D-xylulose 5-phosphate = pyridoxine 5'-phosphate + phosphate + 2 H2O + H(+). Its pathway is cofactor biosynthesis; pyridoxine 5'-phosphate biosynthesis; pyridoxine 5'-phosphate from D-erythrose 4-phosphate: step 5/5. Functionally, catalyzes the complicated ring closure reaction between the two acyclic compounds 1-deoxy-D-xylulose-5-phosphate (DXP) and 3-amino-2-oxopropyl phosphate (1-amino-acetone-3-phosphate or AAP) to form pyridoxine 5'-phosphate (PNP) and inorganic phosphate. This is Pyridoxine 5'-phosphate synthase from Thermodesulfovibrio yellowstonii (strain ATCC 51303 / DSM 11347 / YP87).